The chain runs to 216 residues: Pyrrolidone-carboxylate peptidase (216 aa).

Active-site residues include Glu-80, Cys-143, and His-167.

This sequence belongs to the peptidase C15 family. Homotetramer.

It is found in the cytoplasm. It carries out the reaction Release of an N-terminal pyroglutamyl group from a polypeptide, the second amino acid generally not being Pro.. Its function is as follows. Removes 5-oxoproline from various penultimate amino acid residues except L-proline. In Streptomyces coelicolor (strain ATCC BAA-471 / A3(2) / M145), this protein is Pyrrolidone-carboxylate peptidase (pcp).